Here is a 243-residue protein sequence, read N- to C-terminus: Probable transcriptional regulatory protein BAV2207 (243 aa).

The disordered stretch occupies residues 1-21 (MAGHSKWANIQHRKGRQDAKR).

Belongs to the TACO1 family.

The protein resides in the cytoplasm. The protein is Probable transcriptional regulatory protein BAV2207 of Bordetella avium (strain 197N).